We begin with the raw amino-acid sequence, 211 residues long: SOSS complex subunit B2 (211 aa).

The segment at residues 27–97 (IVLEIGRVTK…TLYTGRGGDL (71 aa)) is a DNA-binding region (OB). Residues 125 to 211 (NQQNKTSKEQ…GRDPRRASKR (87 aa)) form a disordered region. Residues 136-157 (GNSPPNQNAGNGTVPVFSNNNA) show a composition bias toward polar residues. Pro residues predominate over residues 179-195 (NGPPPVTAGGTPAPPKP).

Belongs to the SOSS-B family. SOSS-B2 subfamily. In terms of assembly, component of the SOSS complex, composed of soss-b (soss-b1/nabp2 or soss-b2/nabp1), soss-a/ints3 and soss-c/inip. SOSS complexes containing soss-b1/nabp2 are more abundant than complexes containing soss-b2/nabp1.

It is found in the nucleus. Functionally, component of the SOSS complex, a multiprotein complex that functions downstream of the MRN complex to promote DNA repair and G2/M checkpoint. In the SOSS complex, acts as a sensor of single-stranded DNA that binds to single-stranded DNA. The SOSS complex associates with DNA lesions and influences diverse endpoints in the cellular DNA damage response including cell-cycle checkpoint activation, recombinational repair and maintenance of genomic stability. Required for efficient homologous recombination-dependent repair of double-strand breaks (DSBs). This is SOSS complex subunit B2 (nabp1) from Danio rerio (Zebrafish).